We begin with the raw amino-acid sequence, 219 residues long: MSIQVFCDFDGTITNNDNIMSIMEKFAPPEAEEVKNRILSQELSIQEGVSQLFQLIPTNLHDQIIQFLIETAEIRNGFHEFIQFVNENNISFYVISGGMDFFVYPLLQGLIPKEQIYCNETDFSNEYITVNWPHPCDRLCQNHCGLCKSSLIRKLSDTNDFHIVIGDSITDLQAAKQADKVFARDFLITKCEENHISYTPFETFHDVQTELKHLLEVKL.

Belongs to the HAD-like hydrolase superfamily. MtnX family.

It catalyses the reaction 2-hydroxy-5-methylsulfanyl-3-oxopent-1-enyl phosphate + H2O = 1,2-dihydroxy-5-(methylsulfanyl)pent-1-en-3-one + phosphate. Its pathway is amino-acid biosynthesis; L-methionine biosynthesis via salvage pathway; L-methionine from S-methyl-5-thio-alpha-D-ribose 1-phosphate: step 4/6. Its function is as follows. Dephosphorylates 2-hydroxy-3-keto-5-methylthiopentenyl-1-phosphate (HK-MTPenyl-1-P) yielding 1,2-dihydroxy-3-keto-5-methylthiopentene (DHK-MTPene). The polypeptide is 2-hydroxy-3-keto-5-methylthiopentenyl-1-phosphate phosphatase (Bacillus cereus (strain 03BB102)).